Here is a 178-residue protein sequence, read N- to C-terminus: Ribosome maturation factor RimP (178 aa).

The protein belongs to the RimP family.

The protein localises to the cytoplasm. Its function is as follows. Required for maturation of 30S ribosomal subunits. In Caulobacter vibrioides (strain ATCC 19089 / CIP 103742 / CB 15) (Caulobacter crescentus), this protein is Ribosome maturation factor RimP.